The chain runs to 111 residues: C-type lectin lectoxin-Enh2 (111 aa).

The N-terminal stretch at 1-23 is a signal peptide; that stretch reads MGQFTVVSLGLLAMFLSLSGAKG. Cys26 and Cys37 are oxidised to a cystine. One can recognise a C-type lectin domain in the interval 33-108; that stretch reads RNGVCNKLFP…CASLHPFICQ (76 aa). Residues 72 to 74 carry the Mannose-binding motif; it reads EPN. Glu80, Asn95, and Asp96 together coordinate Ca(2+). Cys82 and Cys99 are disulfide-bonded.

This sequence belongs to the true venom lectin family. Expressed by the venom gland.

The protein localises to the secreted. Mannose-binding lectin which recognizes specific carbohydrate structures and agglutinates a variety of animal cells by binding to cell-surface glycoproteins and glycolipids. May be a calcium-dependent lectin. This chain is C-type lectin lectoxin-Enh2, found in Pseudoferania polylepis (Macleay's water snake).